Reading from the N-terminus, the 223-residue chain is Endo-1,4-beta-xylanase 2 (223 aa).

The signal sequence occupies residues 1 to 19; sequence MVSFTSLLAGVAAISGVLA. Residues 20-33 constitute a propeptide that is removed on maturation; the sequence is APAAEVESVAVEKR. Pyrrolidone carboxylic acid is present on Gln34. The GH11 domain maps to 34-222; sequence QTIQPGTGYN…FSSGSASITV (189 aa). Asn71 and Asn94 each carry an N-linked (GlcNAc...) asparagine glycan. The substrate site is built by Tyr106 and Tyr110. Glu119 functions as the Nucleophile in the catalytic mechanism. Residues Tyr121, Arg155, Pro159, Gln169, and Tyr204 each coordinate substrate. Glu210 (proton donor) is an active-site residue.

This sequence belongs to the glycosyl hydrolase 11 (cellulase G) family.

Its subcellular location is the secreted. The catalysed reaction is Endohydrolysis of (1-&gt;4)-beta-D-xylosidic linkages in xylans.. It participates in glycan degradation; xylan degradation. Its function is as follows. Glycoside hydrolase involved in the hydrolysis of xylan, a major plant cell wall hemicellulose made up of 1,4-beta-linked D-xylopyranose residues. Catalyzes the endohydrolysis of the main-chain 1,4-beta-glycosidic bonds connecting the xylose subunits yielding various xylooligosaccharides and xylose. The catalysis proceeds by a double-displacement reaction mechanism with a putative covalent glycosyl-enzyme intermediate, with retention of the anomeric configuration. Produces xylobiose and xylose as the main degradation products. The sequence is that of Endo-1,4-beta-xylanase 2 from Hypocrea jecorina (strain ATCC 56765 / BCRC 32924 / NRRL 11460 / Rut C-30) (Trichoderma reesei).